The chain runs to 141 residues: MATIKVDVVSAEEQIFSGEAKFVALPGETGELGILPGHTPLITRIRPGAVRIEVEGGNDEFVFVAGGILEVQPGAVTVLADTAIRGKDLDAAKAEEARKRAEETLQNAKSDLDLAKAQSELATAMAQLEAIQRLAKIRSRH.

The protein belongs to the ATPase epsilon chain family. In terms of assembly, F-type ATPases have 2 components, CF(1) - the catalytic core - and CF(0) - the membrane proton channel. CF(1) has five subunits: alpha(3), beta(3), gamma(1), delta(1), epsilon(1). CF(0) has three main subunits: a, b and c.

The protein localises to the cell inner membrane. In terms of biological role, produces ATP from ADP in the presence of a proton gradient across the membrane. This is ATP synthase epsilon chain from Burkholderia ambifaria (strain ATCC BAA-244 / DSM 16087 / CCUG 44356 / LMG 19182 / AMMD) (Burkholderia cepacia (strain AMMD)).